The primary structure comprises 144 residues: HMG1/2-like protein (144 aa).

2 disordered regions span residues 1-42 and 85-144; these read MKGG…PPSA and PFIS…EDDD. 2 stretches are compositionally biased toward basic and acidic residues: residues 8–35 and 89–99; these read AKSDNKLAVKKQAADTKKTKKAVKDPNK and KAEKRKQEYEK. The HMG box DNA-binding region spans 36 to 105; sequence PKRPPSAFFV…EYEKNLQAYN (70 aa). A compositionally biased stretch (acidic residues) spans 126 to 144; that stretch reads NDDDEDQDGSGEDDSEDDD.

The protein belongs to the HMGB family. Expressed at higher levels in dark-grown tissues, such as roots; and at lower levels in light-grown tissues, such as cotyledons and stems.

The protein localises to the nucleus. The sequence is that of HMG1/2-like protein from Ipomoea nil (Japanese morning glory).